Here is a 773-residue protein sequence, read N- to C-terminus: MKFEESMELPVIVVDSGVLLPGASLKIPIRSKLNTRTIEQHLTRGGSNYVVIAYKLSTDKIYNVATIAYIEKLFGWTFNSTTNYSLDVIGLHRANIDKLSFPKCRVSKLEDSSERAEFNHSTIENVISGAKILAQNSESLKFSQEIHNSIDDHDYGKLADLCVSQIKNLEFSQFLDFLGTKNVEKRLEMCEKWMQMQRETKALQLKMAVPGNSEIPKKINKQRIPNSKNQVEQLEEKLSAIEFSEEVSDRVFSELHRLKNMNPQQSEYTVLMNWLELVSNLPWNTSTVDDIEINKARKILEDSHESMDDVKQRVLEHLAVCKINNSVKGMILCFTGPPGIGKTSIAKAIAESMGRKFQRVSLGGIRDESDIRGHRRTYVAAMPGRIIEALKHCKSNNPVFLLDEVDKLYSGNQGSPSAALLELLDPEQNSTFHDHYLNIPFDVSKIMFIATANDVERLEPALKDRLEIIEMSGYSMKEKVKICENHLVNRQLSKHCISPDYVNLDRHAIMAMIEEFTMEAGVRQLERNVGAVCRHVALRLAEALNSDPSADVLPDMDLPIQIGEPDIHKILKAKHMKRVKIVEKMRPLPPGVCFGLSVTTNGGRVMPIEASKCKGTGKIVTTGHLGKVLEESILVAKGWLGANAEKLGLKTLEENDIHVHLPAGAVNKDGPSAGTGLACALVSLAMGVPLRSDAAVTGEISLTGHVLAIGGVKEKVLAAQREGLRRVVLPKSNEEEYLKIDEDIRNEMDVVLADTVEDVIEAMMEKEPVLAKL.

A Lon N-terminal domain is found at 9–198 (LPVIVVDSGV…MCEKWMQMQR (190 aa)). ATP is bound at residue 336 to 343 (GPPGIGKT). Residues 587-766 (PLPPGVCFGL…EDVIEAMMEK (180 aa)) form the Lon proteolytic domain. Catalysis depends on residues Ser672 and Lys715. Positions 771–773 (AKL) match the Microbody targeting signal motif.

It belongs to the peptidase S16 family.

Its subcellular location is the peroxisome matrix. It carries out the reaction Hydrolysis of proteins in presence of ATP.. ATP-dependent serine protease that mediates the selective degradation of misfolded and unassembled polypeptides in the peroxisomal matrix. Necessary for type 2 peroxisome targeting signal (PTS2)-containing protein processing and facilitates peroxisome matrix protein import. This is Lon protease homolog 2, peroxisomal from Caenorhabditis briggsae.